Consider the following 325-residue polypeptide: Acetyl-coenzyme A carboxylase carboxyl transferase subunit alpha (325 aa).

One can recognise a CoA carboxyltransferase C-terminal domain in the interval 38–292 (RLEERLSKLQ…DGILKETLKS (255 aa)).

The protein belongs to the AccA family. As to quaternary structure, acetyl-CoA carboxylase is a heterohexamer composed of biotin carboxyl carrier protein (AccB), biotin carboxylase (AccC) and two subunits each of ACCase subunit alpha (AccA) and ACCase subunit beta (AccD).

The protein resides in the cytoplasm. The catalysed reaction is N(6)-carboxybiotinyl-L-lysyl-[protein] + acetyl-CoA = N(6)-biotinyl-L-lysyl-[protein] + malonyl-CoA. It participates in lipid metabolism; malonyl-CoA biosynthesis; malonyl-CoA from acetyl-CoA: step 1/1. Its function is as follows. Component of the acetyl coenzyme A carboxylase (ACC) complex. First, biotin carboxylase catalyzes the carboxylation of biotin on its carrier protein (BCCP) and then the CO(2) group is transferred by the carboxyltransferase to acetyl-CoA to form malonyl-CoA. This chain is Acetyl-coenzyme A carboxylase carboxyl transferase subunit alpha, found in Bacillus velezensis (strain DSM 23117 / BGSC 10A6 / LMG 26770 / FZB42) (Bacillus amyloliquefaciens subsp. plantarum).